Here is a 252-residue protein sequence, read N- to C-terminus: 5'-nucleotidase SurE (252 aa).

A divalent metal cation is bound by residues Asp8, Asp9, Ser39, and Asn91.

This sequence belongs to the SurE nucleotidase family. A divalent metal cation serves as cofactor.

It localises to the cytoplasm. The enzyme catalyses a ribonucleoside 5'-phosphate + H2O = a ribonucleoside + phosphate. Functionally, nucleotidase that shows phosphatase activity on nucleoside 5'-monophosphates. This is 5'-nucleotidase SurE from Bordetella pertussis (strain Tohama I / ATCC BAA-589 / NCTC 13251).